Here is a 390-residue protein sequence, read N- to C-terminus: Elongation factor Tu 2 (390 aa).

One can recognise a tr-type G domain in the interval 10 to 203 (KPHLNIGTMG…AVDTYVPMPE (194 aa)). Residues 19-26 (GHVDHGKT) are G1. 19–26 (GHVDHGKT) provides a ligand contact to GTP. Threonine 26 is a Mg(2+) binding site. The interval 60 to 64 (GITIN) is G2. Positions 81-84 (DMPG) are G3. GTP-binding positions include 81–85 (DMPGH) and 136–139 (NKAD). Residues 136–139 (NKAD) are G4. Residues 173-175 (SGL) are G5.

This sequence belongs to the TRAFAC class translation factor GTPase superfamily. Classic translation factor GTPase family. EF-Tu/EF-1A subfamily. In terms of assembly, monomer.

Its subcellular location is the cytoplasm. It catalyses the reaction GTP + H2O = GDP + phosphate + H(+). GTP hydrolase that promotes the GTP-dependent binding of aminoacyl-tRNA to the A-site of ribosomes during protein biosynthesis. The protein is Elongation factor Tu 2 of Streptomyces avermitilis (strain ATCC 31267 / DSM 46492 / JCM 5070 / NBRC 14893 / NCIMB 12804 / NRRL 8165 / MA-4680).